Here is a 227-residue protein sequence, read N- to C-terminus: 2-phospho-L-lactate guanylyltransferase (227 aa).

The protein belongs to the CofC family. Homodimer.

The enzyme catalyses (2S)-2-phospholactate + GTP + H(+) = (2S)-lactyl-2-diphospho-5'-guanosine + diphosphate. The protein operates within cofactor biosynthesis; coenzyme F420 biosynthesis. Its function is as follows. Guanylyltransferase that catalyzes the activation of (2S)-2-phospholactate (2-PL) as (2S)-lactyl-2-diphospho-5'-guanosine, via the condensation of 2-PL with GTP. It is involved in the biosynthesis of coenzyme F420, a hydride carrier cofactor. This chain is 2-phospho-L-lactate guanylyltransferase, found in Methanocaldococcus sp. (strain FS406-22).